A 110-amino-acid polypeptide reads, in one-letter code: Methionine-R-sulfoxide reductase B1-A (110 aa).

Residues Met1–Lys104 form the MsrB domain. Positions 23, 26, 69, and 72 each coordinate Zn(2+). The active-site Nucleophile is Sec93. Residue Sec93 is a non-standard amino acid, selenocysteine.

Belongs to the MsrB Met sulfoxide reductase family. It depends on Zn(2+) as a cofactor. As to expression, in the embryo, expressed in the polster, paraxial mesoderm, tectum, otic vesicle and liver.

It localises to the cytoplasm. The protein resides in the nucleus. The protein localises to the cytoskeleton. The catalysed reaction is L-methionyl-[protein] + [thioredoxin]-disulfide + H2O = L-methionyl-(R)-S-oxide-[protein] + [thioredoxin]-dithiol. It carries out the reaction [thioredoxin]-disulfide + L-methionine + H2O = L-methionine (R)-S-oxide + [thioredoxin]-dithiol. Its function is as follows. Methionine-sulfoxide reductase that specifically reduces methionine (R)-sulfoxide back to methionine. While in many cases, methionine oxidation is the result of random oxidation following oxidative stress, methionine oxidation is also a post-translational modification that takes place on specific residue. Acts as a regulator of actin assembly by reducing methionine (R)-sulfoxide mediated by MICALs (mical1, mical2 or mical3) on actin, thereby promoting filament repolymerization. Plays a role in innate immunity by reducing oxidized actin, leading to actin repolymerization in macrophages. The protein is Methionine-R-sulfoxide reductase B1-A (msrb1) of Danio rerio (Zebrafish).